The following is a 129-amino-acid chain: NADH-quinone oxidoreductase subunit 15 (129 aa).

The protein belongs to the complex I Nqo15 family. As to quaternary structure, NDH-1 is composed of 15 different subunits, Nqo1 to Nqo15. The complex has a L-shaped structure, with the hydrophobic arm (subunits Nqo7, Nqo8 and Nqo10 to Nqo14) embedded in the membrane and the hydrophilic peripheral arm (subunits Nqo1 to Nqo6, Nqo9 and Nqo15) protruding into the bacterial cytoplasm. The hydrophilic domain contains all the redox centers. Nqo15 is bound to the side of the complex near the N-terminus of Nqo3, where it interacts with subunits Nqo3, Nqo2, Nqo1, Nqo9 and Nqo4.

Its subcellular location is the cell membrane. It catalyses the reaction a quinone + NADH + 5 H(+)(in) = a quinol + NAD(+) + 4 H(+)(out). In terms of biological role, NDH-1 shuttles electrons from NADH, via FMN and iron-sulfur (Fe-S) centers, to quinones in the respiratory chain. The immediate electron acceptor for the enzyme in this species is menaquinone. Couples the redox reaction to proton translocation (for every two electrons transferred, four hydrogen ions are translocated across the cytoplasmic membrane), and thus conserves the redox energy in a proton gradient required for the synthesis of ATP. The Nqo15 subunit has probably a role in complex stabilization, and may be also involved in the storage of iron for iron-sulfur cluster regeneration in the complex. This Thermus thermophilus (strain ATCC 27634 / DSM 579 / HB8) protein is NADH-quinone oxidoreductase subunit 15 (nqo15).